We begin with the raw amino-acid sequence, 83 residues long: Exodeoxyribonuclease 7 small subunit (83 aa).

It belongs to the XseB family. In terms of assembly, heterooligomer composed of large and small subunits.

The protein resides in the cytoplasm. The enzyme catalyses Exonucleolytic cleavage in either 5'- to 3'- or 3'- to 5'-direction to yield nucleoside 5'-phosphates.. In terms of biological role, bidirectionally degrades single-stranded DNA into large acid-insoluble oligonucleotides, which are then degraded further into small acid-soluble oligonucleotides. The polypeptide is Exodeoxyribonuclease 7 small subunit (Nitrobacter winogradskyi (strain ATCC 25391 / DSM 10237 / CIP 104748 / NCIMB 11846 / Nb-255)).